The following is a 152-amino-acid chain: Protein D1 (152 aa).

Belongs to the phosphatidylethanolamine-binding protein family.

This is Protein D1 (D1) from Onchocerca volvulus.